The chain runs to 300 residues: Mitochondrial GTP/GDP carrier protein 1 (300 aa).

3 Solcar repeats span residues 8 to 108 (QSGL…KKDF), 117 to 198 (GKAM…AKEY), and 208 to 293 (ATWS…LIPR). The next 6 membrane-spanning stretches (helical) occupy residues 14-34 (LLGS…VDTI), 85-101 (QRVY…EFLN), 122-142 (SAAA…LDVL), 173-189 (GWGW…FALF), 214-234 (FISS…LDVI), and 268-285 (GLTP…FSFA).

It belongs to the mitochondrial carrier (TC 2.A.29) family.

The protein resides in the mitochondrion inner membrane. In terms of biological role, mitochondrial GTP/GDP transporter required for GTP uptake and GDP exit from mitochondria. Involved in mitochondrial iron transport and essential for mitochondrial genome maintenance. This chain is Mitochondrial GTP/GDP carrier protein 1 (GGC1), found in Saccharomyces cerevisiae (strain ATCC 204508 / S288c) (Baker's yeast).